The primary structure comprises 104 residues: Antitoxin HigA-2 (104 aa).

One can recognise an HTH cro/C1-type domain in the interval 45-98; that stretch reads IVSIREQFNMSRGVFARLLHTSSRTLENWEQGRSVPNGQAVTLLKLVQRHPETL. Positions 56–75 form a DNA-binding region, H-T-H motif; the sequence is RGVFARLLHTSSRTLENWEQ.

Antitoxin component of a type II toxin-antitoxin (TA) system that counteracts the effect of the HigB-2 toxin. Binds to its own promoter and regulates transcription of the higB-2/higA-2 operon. The polypeptide is Antitoxin HigA-2 (higA-2) (Vibrio cholerae serotype O1 (strain ATCC 39315 / El Tor Inaba N16961)).